The following is a 201-amino-acid chain: Dephospho-CoA kinase (201 aa).

A DPCK domain is found at 7 to 201; that stretch reads AIALSGGIGT…IETIKKDFHV (195 aa). 15 to 20 serves as a coordination point for ATP; that stretch reads GTGKST.

This sequence belongs to the CoaE family.

It localises to the cytoplasm. It carries out the reaction 3'-dephospho-CoA + ATP = ADP + CoA + H(+). It participates in cofactor biosynthesis; coenzyme A biosynthesis; CoA from (R)-pantothenate: step 5/5. Catalyzes the phosphorylation of the 3'-hydroxyl group of dephosphocoenzyme A to form coenzyme A. This is Dephospho-CoA kinase from Wolinella succinogenes (strain ATCC 29543 / DSM 1740 / CCUG 13145 / JCM 31913 / LMG 7466 / NCTC 11488 / FDC 602W) (Vibrio succinogenes).